A 308-amino-acid polypeptide reads, in one-letter code: Elongation factor Ts (308 aa).

Residues 80–83 are involved in Mg(2+) ion dislocation from EF-Tu; the sequence is TDFV.

This sequence belongs to the EF-Ts family.

The protein resides in the cytoplasm. In terms of biological role, associates with the EF-Tu.GDP complex and induces the exchange of GDP to GTP. It remains bound to the aminoacyl-tRNA.EF-Tu.GTP complex up to the GTP hydrolysis stage on the ribosome. This Parvibaculum lavamentivorans (strain DS-1 / DSM 13023 / NCIMB 13966) protein is Elongation factor Ts.